Here is a 154-residue protein sequence, read N- to C-terminus: Probable deoxyuridine 5'-triphosphate nucleotidohydrolase (154 aa).

The protein belongs to the dCTP deaminase family. Archaeal dUTPase subfamily.

It catalyses the reaction dUTP + H2O = dUMP + diphosphate + H(+). It functions in the pathway pyrimidine metabolism; dUMP biosynthesis; dUMP from dCTP (dUTP route): step 2/2. Its function is as follows. This enzyme is involved in nucleotide metabolism: it produces dUMP, the immediate precursor of thymidine nucleotides and it decreases the intracellular concentration of dUTP so that uracil cannot be incorporated into DNA. This Methanopyrus kandleri (strain AV19 / DSM 6324 / JCM 9639 / NBRC 100938) protein is Probable deoxyuridine 5'-triphosphate nucleotidohydrolase.